The following is a 141-amino-acid chain: Large ribosomal subunit protein uL11 (141 aa).

Belongs to the universal ribosomal protein uL11 family. Part of the ribosomal stalk of the 50S ribosomal subunit. Interacts with L10 and the large rRNA to form the base of the stalk. L10 forms an elongated spine to which L12 dimers bind in a sequential fashion forming a multimeric L10(L12)X complex. One or more lysine residues are methylated.

Its function is as follows. Forms part of the ribosomal stalk which helps the ribosome interact with GTP-bound translation factors. The polypeptide is Large ribosomal subunit protein uL11 (Moorella thermoacetica (strain ATCC 39073 / JCM 9320)).